The following is a 120-amino-acid chain: Vanadium-binding protein 2 (120 aa).

A signal peptide spans 1 to 20; sequence MSKVIFALVLVVVLVACINA. The propeptide occupies 21 to 29; sequence TYVEFEEAY. Intrachain disulfides connect Cys34–Cys88, Cys38–Cys84, Cys42–Cys81, Cys48–Cys74, Cys52–Cys69, Cys56–Cys65, Cys92–Cys119, Cys97–Cys114, and Cys101–Cys111.

In terms of assembly, interacts with VIP1. As to expression, expressed in vanadocytes.

Its subcellular location is the cytoplasm. Functionally, acts as a vanadium reductase which may form an electron transfer cascade in conjunction with NADPH and glutathione through thiol disulfide exchange reactions. Partial cleavage of its disulfide bonds results in the reduction of V(5+) to V(4+). Binds up to 24 V(4+) ions per protein at pH 7.5. Also binds Fe(3+) and Cu(2+) and, to a lesser extent, Co(2+), Zn(2+) and Ni(2+). The polypeptide is Vanadium-binding protein 2 (Ascidia sydneiensis samea (Vanadium-rich ascidian)).